A 184-amino-acid polypeptide reads, in one-letter code: ATP synthase subunit b, chloroplastic (184 aa).

A helical membrane pass occupies residues 27–49; it reads LATNPINLSVVFGVLIFFGKGVL.

It belongs to the ATPase B chain family. In terms of assembly, F-type ATPases have 2 components, F(1) - the catalytic core - and F(0) - the membrane proton channel. F(1) has five subunits: alpha(3), beta(3), gamma(1), delta(1), epsilon(1). F(0) has four main subunits: a(1), b(1), b'(1) and c(10-14). The alpha and beta chains form an alternating ring which encloses part of the gamma chain. F(1) is attached to F(0) by a central stalk formed by the gamma and epsilon chains, while a peripheral stalk is formed by the delta, b and b' chains.

The protein resides in the plastid. It is found in the chloroplast thylakoid membrane. F(1)F(0) ATP synthase produces ATP from ADP in the presence of a proton or sodium gradient. F-type ATPases consist of two structural domains, F(1) containing the extramembraneous catalytic core and F(0) containing the membrane proton channel, linked together by a central stalk and a peripheral stalk. During catalysis, ATP synthesis in the catalytic domain of F(1) is coupled via a rotary mechanism of the central stalk subunits to proton translocation. In terms of biological role, component of the F(0) channel, it forms part of the peripheral stalk, linking F(1) to F(0). The chain is ATP synthase subunit b, chloroplastic from Olimarabidopsis pumila (Dwarf rocket).